Reading from the N-terminus, the 120-residue chain is Large ribosomal subunit protein uL18 (120 aa).

The protein belongs to the universal ribosomal protein uL18 family. Part of the 50S ribosomal subunit; part of the 5S rRNA/L5/L18/L25 subcomplex. Contacts the 5S and 23S rRNAs.

Its function is as follows. This is one of the proteins that bind and probably mediate the attachment of the 5S RNA into the large ribosomal subunit, where it forms part of the central protuberance. In Rhodopseudomonas palustris (strain BisB5), this protein is Large ribosomal subunit protein uL18.